The sequence spans 122 residues: uncharacterized protein (122 aa).

A run of 2 helical transmembrane segments spans residues 34-54 (IIFLTVGLLLFIAALALGVLV) and 91-111 (FVLAAFGFVCMVASFLYFVSF).

It is found in the cell membrane. This is an uncharacterized protein from Mycoplasma pneumoniae (strain ATCC 29342 / M129 / Subtype 1) (Mycoplasmoides pneumoniae).